The sequence spans 154 residues: Protein X (154 aa).

The mitochondrial targeting sequence stretch occupies residues 68–117; that stretch reads PCALRFTSARRMETTVNAPQSLPTTLHKRTLGLSPRSTTWIEEYIKDCVF.

The protein belongs to the orthohepadnavirus protein X family. In terms of assembly, may form homodimer. May interact with host CEBPA, CFLAR, CREB1, DDB1, E4F1, HBXIP, HSPD1/HSP60, NFKBIA, POLR2E and SMAD4. Interacts with host SMC5-SMC6 complex and induces its degradation. Interacts with host TRPC4AP; leading to prevent ubiquitination of TRPC4AP. Interacts with host PLSCR1; this interaction promotes ubiquitination and degradation of HBx and impairs HBx-mediated cell proliferation. In terms of processing, a fraction may be phosphorylated in insect cells and HepG2 cells, a human hepatoblastoma cell line. Phosphorylated in vitro by host protein kinase C or mitogen-activated protein kinase. N-acetylated in insect cells.

It is found in the host cytoplasm. Its subcellular location is the host nucleus. The protein resides in the host mitochondrion. In terms of biological role, multifunctional protein that plays a role in silencing host antiviral defenses and promoting viral transcription. Does not seem to be essential for HBV infection. May be directly involved in development of cirrhosis and liver cancer (hepatocellular carcinoma). Most of cytosolic activities involve modulation of cytosolic calcium. The effect on apoptosis is controversial depending on the cell types in which the studies have been conducted. May induce apoptosis by localizing in mitochondria and causing loss of mitochondrial membrane potential. May also modulate apoptosis by binding host CFLAR, a key regulator of the death-inducing signaling complex (DISC). Promotes viral transcription by using the host E3 ubiquitin ligase DDB1 to target the SMC5-SMC6 complex to proteasomal degradation. This host complex would otherwise bind to viral episomal DNA, and prevents its transcription. Moderately stimulates transcription of many different viral and cellular transcription elements. Promoters and enhancers stimulated by HBx contain DNA binding sites for NF-kappa-B, AP-1, AP-2, c-EBP, ATF/CREB, or the calcium-activated factor NF-AT. The protein is Protein X of Hepatitis B virus genotype H subtype adw4 (isolate Nicaragua/2928Nic/1997) (HBV-H).